Reading from the N-terminus, the 226-residue chain is ATP synthase F(0) complex subunit a (226 aa).

A run of 6 helical transmembrane segments spans residues 6–26 (FAPF…IITF), 68–88 (WTLM…LGLL), 97–117 (QLSM…IMGF), 138–158 (IPML…ALAV), 164–184 (ITAG…LSSI), and 195–215 (ILFL…YVFT).

This sequence belongs to the ATPase A chain family. In terms of assembly, component of the ATP synthase complex composed at least of ATP5F1A/subunit alpha, ATP5F1B/subunit beta, ATP5MC1/subunit c (homooctomer), MT-ATP6/subunit a, MT-ATP8/subunit 8, ATP5ME/subunit e, ATP5MF/subunit f, ATP5MG/subunit g, ATP5MK/subunit k, ATP5MJ/subunit j, ATP5F1C/subunit gamma, ATP5F1D/subunit delta, ATP5F1E/subunit epsilon, ATP5PF/subunit F6, ATP5PB/subunit b, ATP5PD/subunit d, ATP5PO/subunit OSCP. ATP synthase complex consists of a soluble F(1) head domain (subunits alpha(3) and beta(3)) - the catalytic core - and a membrane F(0) domain - the membrane proton channel (subunits c, a, 8, e, f, g, k and j). These two domains are linked by a central stalk (subunits gamma, delta, and epsilon) rotating inside the F1 region and a stationary peripheral stalk (subunits F6, b, d, and OSCP). Interacts with DNAJC30; interaction is direct.

Its subcellular location is the mitochondrion inner membrane. It catalyses the reaction H(+)(in) = H(+)(out). Its function is as follows. Subunit a, of the mitochondrial membrane ATP synthase complex (F(1)F(0) ATP synthase or Complex V) that produces ATP from ADP in the presence of a proton gradient across the membrane which is generated by electron transport complexes of the respiratory chain. ATP synthase complex consist of a soluble F(1) head domain - the catalytic core - and a membrane F(1) domain - the membrane proton channel. These two domains are linked by a central stalk rotating inside the F(1) region and a stationary peripheral stalk. During catalysis, ATP synthesis in the catalytic domain of F(1) is coupled via a rotary mechanism of the central stalk subunits to proton translocation. With the subunit c (ATP5MC1), forms the proton-conducting channel in the F(0) domain, that contains two crucial half-channels (inlet and outlet) that facilitate proton movement from the mitochondrial intermembrane space (IMS) into the matrix. Protons are taken up via the inlet half-channel and released through the outlet half-channel, following a Grotthuss mechanism. This Didelphis virginiana (North American opossum) protein is ATP synthase F(0) complex subunit a.